We begin with the raw amino-acid sequence, 190 residues long: Isopentenyl-diphosphate Delta-isomerase (190 aa).

Mn(2+) contacts are provided by H27 and H34. Residues 32 to 166 (ALHLAFSCHV…PWAFSPWLTL (135 aa)) enclose the Nudix hydrolase domain. Residue C69 is part of the active site. H71 lines the Mn(2+) pocket. E89 contacts Mg(2+). The Mn(2+) site is built by E116 and E118. Residue E118 is part of the active site.

Belongs to the IPP isomerase type 1 family. It depends on Mg(2+) as a cofactor. Requires Mn(2+) as cofactor.

It is found in the cytoplasm. It catalyses the reaction isopentenyl diphosphate = dimethylallyl diphosphate. It functions in the pathway isoprenoid biosynthesis; dimethylallyl diphosphate biosynthesis; dimethylallyl diphosphate from isopentenyl diphosphate: step 1/1. In terms of biological role, catalyzes the 1,3-allylic rearrangement of the homoallylic substrate isopentenyl (IPP) to its highly electrophilic allylic isomer, dimethylallyl diphosphate (DMAPP). This chain is Isopentenyl-diphosphate Delta-isomerase, found in Clavibacter sepedonicus (Clavibacter michiganensis subsp. sepedonicus).